The chain runs to 2450 residues: Tetratricopeptide repeat protein 28 (2450 aa).

Methionine 1 is modified (N-acetylmethionine). Residues 1–36 form a disordered region; that stretch reads MEQPPPLAPEPASARSRRRREPESPPAPIPLFGART. The residue at position 24 (serine 24) is a Phosphoserine. 28 TPR repeats span residues 52 to 85, 87 to 119, 120 to 153, 190 to 223, 228 to 261, 268 to 301, 308 to 341, 348 to 381, 388 to 421, 428 to 461, 468 to 501, 508 to 541, 548 to 581, 588 to 621, 628 to 661, 668 to 701, 708 to 741, 748 to 781, 788 to 821, 828 to 861, 871 to 904, 911 to 944, 951 to 984, 991 to 1024, 1031 to 1064, 1071 to 1104, 1111 to 1144, and 1163 to 1196; these read FVEK…DPQN, ILYS…NPKW, PKAY…DPKS, FVVV…GTCS, GSVF…AKTL, CRAH…AMKL, SSAL…AKQS, AREL…AKDL, ARAY…AQEL, MRAY…AEDL, GRAS…AQEL, GRAY…SMEV, ASTH…AREL, ARAL…APDL, GKVC…AKDL, AKAY…AQSL, FRAL…SHHV, ASAY…YQEL, CRAH…GRKL, AQVY…LQQL, GRAY…AQSL, AKAY…AHEL, AQAY…ARDM, SDAA…AEET, GRAY…AAQM, TVSY…AEQL, AKIR…FETI, and TSSY…AFAD. The disordered stretch occupies residues 1362-1381; it reads SGTVSPSKDGTSSLPRRQNS. Serine 1584 and serine 2098 each carry phosphoserine. The disordered stretch occupies residues 2001–2364; that stretch reads KPEGGLEGGG…GTLTSKRDVL (364 aa). Over residues 2090-2116 the composition is skewed to polar residues; sequence SVSSKGSVSTPNSPVKMTLIPSPNSPF. Residues 2124–2140 are compositionally biased toward low complexity; that stretch reads SSDTGESDQSSTETDST. The segment covering 2143-2153 has biased composition (basic and acidic residues); the sequence is SQEESTPKLDP. Residues 2191-2206 show a composition bias toward polar residues; the sequence is APSSTTVFRASETSAF. Residue serine 2216 is modified to Phosphoserine. Polar residues predominate over residues 2229-2245; that stretch reads ARSSSLPKVSSPATSEV. Composition is skewed to low complexity over residues 2252 to 2262 and 2296 to 2320; these read SPPGSSHPSPG and SPAC…SPAD. 2 positions are modified to phosphoserine: serine 2365 and serine 2370.

As to quaternary structure, interacts with AURKB. As to expression, expressed in embryos at all stages examined. In adult tissues, detected in heart and at low levels in kidney and testis.

The protein resides in the cytoplasm. It is found in the cytoskeleton. It localises to the microtubule organizing center. Its subcellular location is the centrosome. The protein localises to the spindle. The protein resides in the spindle pole. It is found in the midbody. During mitosis, may be involved in the condensation of spindle midzone microtubules, leading to the formation of midbody. Functionally, essential for the formation and integrity of the midbody. Max play a critical role in the progress of mitosis and cytokinesis during cell cycle. The polypeptide is Tetratricopeptide repeat protein 28 (Ttc28) (Mus musculus (Mouse)).